The following is a 999-amino-acid chain: Transcription-repair-coupling factor (999 aa).

The region spanning 499-656 is the Helicase ATP-binding domain; it reads DLSSHRVMDR…LSQIKGISSL (158 aa). 512–519 provides a ligand contact to ATP; the sequence is GDVGFGKT. The short motif at 609–612 is the DEEH box element; that stretch reads DEEH. The region spanning 677–833 is the Helicase C-terminal domain; that stretch reads LLKEIIYREL…SVAYHDLEIR (157 aa).

This sequence in the N-terminal section; belongs to the UvrB family. The protein in the C-terminal section; belongs to the helicase family. RecG subfamily.

It localises to the cytoplasm. Couples transcription and DNA repair by recognizing RNA polymerase (RNAP) stalled at DNA lesions. Mediates ATP-dependent release of RNAP and its truncated transcript from the DNA, and recruitment of nucleotide excision repair machinery to the damaged site. This chain is Transcription-repair-coupling factor, found in Helicobacter pylori (strain ATCC 700392 / 26695) (Campylobacter pylori).